The following is a 663-amino-acid chain: Bicarbonate transport ATP-binding protein CmpC (663 aa).

The 235-residue stretch at 5–239 (VAVENIEKSF…RPRKRMDVVH (235 aa)) folds into the ABC transporter domain. Residue 42 to 49 (GHSGCGKS) coordinates ATP. Residues 281 to 663 (LEIGYVPLMA…LDQPRPIAAA (383 aa)) form a cmpA-like region.

Belongs to the ABC transporter superfamily. Nitrate/nitrite/cyanate uptake transporter (NitT) (TC 3.A.1.16) family. In terms of assembly, the complex is composed of two ATP-binding proteins (CmpC and CmpD), a transmembrane protein (CmpB) and a solute-binding protein (CmpA).

Its subcellular location is the cell inner membrane. In terms of biological role, part of the ABC transporter complex CmpABCD involved in bicarbonate transport. Responsible for energy coupling to the transport system. The sequence is that of Bicarbonate transport ATP-binding protein CmpC (cmpC) from Synechococcus elongatus (strain ATCC 33912 / PCC 7942 / FACHB-805) (Anacystis nidulans R2).